We begin with the raw amino-acid sequence, 270 residues long: uncharacterized protein (270 aa).

Disordered stretches follow at residues 35 to 67 (IKQD…GGNK) and 168 to 204 (SNNN…DNSN). Residues 39 to 48 (NNNNNNNNTN) show a composition bias toward low complexity. Residues 49-67 (VSLSPSIKSQATSSTGGNK) show a composition bias toward polar residues. Residues 168-191 (SNNNNNNNNNNNNNNNNNNNNNNN) are compositionally biased toward low complexity.

This is an uncharacterized protein from Dictyostelium discoideum (Social amoeba).